A 307-amino-acid polypeptide reads, in one-letter code: Urease accessory protein UreD (307 aa).

This sequence belongs to the UreD family. As to quaternary structure, ureD, UreF and UreG form a complex that acts as a GTP-hydrolysis-dependent molecular chaperone, activating the urease apoprotein by helping to assemble the nickel containing metallocenter of UreC. The UreE protein probably delivers the nickel.

The protein localises to the cytoplasm. Required for maturation of urease via the functional incorporation of the urease nickel metallocenter. This is Urease accessory protein UreD from Prochlorococcus marinus (strain NATL2A).